The sequence spans 381 residues: Cytochrome b (381 aa).

4 helical membrane passes run 34–54, 78–99, 114–134, and 179–199; these read FGSLLGLCLIIQIVTGLFLAM, WLIRNIHANGASLFFVCIYFHI, WNIGVILLFLLMATAFVGYVL, and FFAFHFLLPFLITALMIIHVL. Heme b-binding residues include His-84 and His-98. Residues His-183 and His-197 each coordinate heme b. His-202 contacts a ubiquinone. Transmembrane regions (helical) follow at residues 227 to 247, 289 to 309, 321 to 341, and 348 to 368; these read YKDALGFLTLLILLGVLALFL, LGGVLALLFSILILMLVPFLH, LTQIFFWTLVTNMLILTWIGG, and FILIGQIASISYFSLFLIALP.

Belongs to the cytochrome b family. As to quaternary structure, the cytochrome bc1 complex contains 3 respiratory subunits (MT-CYB, CYC1 and UQCRFS1), 2 core proteins (UQCRC1 and UQCRC2) and probably 6 low-molecular weight proteins. The cofactor is heme b.

It is found in the mitochondrion inner membrane. Component of the ubiquinol-cytochrome c reductase complex (complex III or cytochrome b-c1 complex) that is part of the mitochondrial respiratory chain. The b-c1 complex mediates electron transfer from ubiquinol to cytochrome c. Contributes to the generation of a proton gradient across the mitochondrial membrane that is then used for ATP synthesis. The sequence is that of Cytochrome b (mt-cyb) from Isurus oxyrinchus (Shortfin mako shark).